Consider the following 572-residue polypeptide: Urease subunit alpha (572 aa).

Residues 136 to 572 form the Urease domain; it reads GGIDTHIHWI…VPLAQRYFLF (437 aa). Ni(2+) contacts are provided by histidine 141, histidine 143, and lysine 224. Position 224 is an N6-carboxylysine (lysine 224). Position 226 (histidine 226) interacts with substrate. The Ni(2+) site is built by histidine 253 and histidine 279. Histidine 327 serves as the catalytic Proton donor. Aspartate 367 contributes to the Ni(2+) binding site.

Belongs to the metallo-dependent hydrolases superfamily. Urease alpha subunit family. As to quaternary structure, heterotrimer of UreA (gamma), UreB (beta) and UreC (alpha) subunits. Three heterotrimers associate to form the active enzyme. Ni cation is required as a cofactor. In terms of processing, carboxylation allows a single lysine to coordinate two nickel ions.

It is found in the cytoplasm. The enzyme catalyses urea + 2 H2O + H(+) = hydrogencarbonate + 2 NH4(+). Its pathway is nitrogen metabolism; urea degradation; CO(2) and NH(3) from urea (urease route): step 1/1. This chain is Urease subunit alpha, found in Actinobacillus pleuropneumoniae serotype 3 (strain JL03).